A 342-amino-acid chain; its full sequence is Ribosomal RNA small subunit methyltransferase C (342 aa).

The protein belongs to the methyltransferase superfamily. RsmC family. Monomer.

The protein resides in the cytoplasm. The catalysed reaction is guanosine(1207) in 16S rRNA + S-adenosyl-L-methionine = N(2)-methylguanosine(1207) in 16S rRNA + S-adenosyl-L-homocysteine + H(+). Its function is as follows. Specifically methylates the guanine in position 1207 of 16S rRNA in the 30S particle. This Cronobacter sakazakii (strain ATCC BAA-894) (Enterobacter sakazakii) protein is Ribosomal RNA small subunit methyltransferase C.